A 270-amino-acid chain; its full sequence is MNRIIRGVIQYNQKIKAGLVKQFEHVSDHPNPTAVMFTCMDSRMLPTRFTQSAVGDMFVVRNAGNMIPAAPNYGSYSEVSINTEPAALELAVKRGKIRHVVVCGHSDCKAMNTLYQLHQCPTKFDVSSPMDQWLRRNGFESMKKLNERLHIGPKTMKFESEVAPSQSFEAIIDPMEKWSAEDKLSQINVLQQIMNISTHEFLKDYLEAGNLHLHGAWFNIYDGEVFLFSKDRKRFVVIDEKTVPSLSAELERRCPLPEDKAGDVVIQNLH.

Zn(2+) contacts are provided by cysteine 39, aspartate 41, histidine 105, and cysteine 108.

It belongs to the beta-class carbonic anhydrase family. It depends on Zn(2+) as a cofactor.

It carries out the reaction hydrogencarbonate + H(+) = CO2 + H2O. In terms of biological role, reversible hydration of carbon dioxide. The sequence is that of Beta carbonic anhydrase 1 from Caenorhabditis briggsae.